The chain runs to 486 residues: Serralysin (486 aa).

Residue His187 participates in Zn(2+) binding. The active site involves Glu188. Zn(2+) is bound by residues His191 and His197. 8 residues coordinate Ca(2+): Arg266, Asp269, Asp298, Gly300, Gly301, Asp303, Thr340, and Glu342. Hemolysin-type calcium-binding repeat units lie at residues 345–362 and 363–380; these read IGGS…ANTL and KGGA…ADNL.

It belongs to the peptidase M10B family. Requires Zn(2+) as cofactor. Ca(2+) serves as cofactor.

The protein localises to the secreted. It catalyses the reaction Preferential cleavage of bonds with hydrophobic residues in P1'.. The chain is Serralysin (prtA1) from Photorhabdus luminescens (Xenorhabdus luminescens).